Reading from the N-terminus, the 309-residue chain is GTP cyclohydrolase MptA 2 (309 aa).

Belongs to the GTP cyclohydrolase IV family. Homodimer. Fe(2+) serves as cofactor.

The enzyme catalyses GTP + H2O = 7,8-dihydroneopterin 2',3'-cyclic phosphate + formate + diphosphate + H(+). Its pathway is cofactor biosynthesis; 5,6,7,8-tetrahydromethanopterin biosynthesis. Functionally, converts GTP to 7,8-dihydro-D-neopterin 2',3'-cyclic phosphate, the first intermediate in the biosynthesis of coenzyme methanopterin. The polypeptide is GTP cyclohydrolase MptA 2 (Methanocella arvoryzae (strain DSM 22066 / NBRC 105507 / MRE50)).